The primary structure comprises 868 residues: Leucine--tRNA ligase (868 aa).

The short motif at 42–52 (PYPSGKLHMGH) is the 'HIGH' region element. Residues 627-631 (KMSKS) carry the 'KMSKS' region motif. Lysine 630 lines the ATP pocket.

Belongs to the class-I aminoacyl-tRNA synthetase family.

It is found in the cytoplasm. The enzyme catalyses tRNA(Leu) + L-leucine + ATP = L-leucyl-tRNA(Leu) + AMP + diphosphate. The chain is Leucine--tRNA ligase from Pseudomonas putida (strain ATCC 700007 / DSM 6899 / JCM 31910 / BCRC 17059 / LMG 24140 / F1).